The following is a 521-amino-acid chain: Phosphoethanolamine transferase EptA (521 aa).

Helical transmembrane passes span 18–38 (AGLL…FVYV), 47–67 (FIAM…LALG), 79–99 (IVFS…KVFL), 118–138 (FLSV…GYVI), 150–170 (APFL…LANT), and 182–202 (FIGG…VSAL).

This sequence belongs to the phosphoethanolamine transferase family. EptA subfamily.

It is found in the cell inner membrane. It functions in the pathway bacterial outer membrane biogenesis; LPS lipid A biosynthesis. In terms of biological role, probably catalyzes the addition of a phosphoethanolamine moiety to the dephosphorylated 1-position of the disaccharide backbone of lipid A. Lipid A that is 1-phosphorylated is not a substrate for this enzyme. The chain is Phosphoethanolamine transferase EptA from Helicobacter pylori (strain ATCC 700392 / 26695) (Campylobacter pylori).